Reading from the N-terminus, the 294-residue chain is Nucleotide-binding protein CLK_2809 (294 aa).

ATP is bound at residue 8–15 (GLSGAGKT). 59–62 (DIRG) lines the GTP pocket.

Belongs to the RapZ-like family.

Functionally, displays ATPase and GTPase activities. The sequence is that of Nucleotide-binding protein CLK_2809 from Clostridium botulinum (strain Loch Maree / Type A3).